The following is a 1069-amino-acid chain: Kinesin-like protein vab-8 (1069 aa).

One can recognise a Kinesin motor domain in the interval 15–325 (PLRTIPKLRL…ACKIARTRVK (311 aa)). Disordered regions lie at residues 328 to 374 (MGHG…LESG), 391 to 436 (SRTT…KSSP), and 572 to 598 (EQEE…RILS). Interaction with unc-51 regions lie at residues 331–517 (GRKP…KSKY) and 517–719 (YNLD…TVVD). Composition is skewed to low complexity over residues 339 to 364 (SSGT…GTPR) and 391 to 407 (SRTT…TPTS). The interaction with unc-73 stretch occupies residues 403–877 (STPTSIRPLH…SAERDRKTSK (475 aa)). Residues 719 to 769 (DWSQIERKKEREKDAMEEEKRKEVLRERRAKLKITELEIKRERNMIDKELD) adopt a coiled-coil conformation. Residues 786–960 (SLSPCRGGRT…RQSYSASSGY (175 aa)) form a disordered region. Residues 824–847 (GGSLAKLSASGASGSGPPSSPSLG) are compositionally biased toward low complexity. A compositionally biased stretch (basic and acidic residues) spans 883-897 (SSKERRSSGSKEELQ). Over residues 906 to 928 (TSPKTYGGPGTSSSGRGSSAPGS) the composition is skewed to low complexity. The span at 938-960 (TEKTANGTMPRSKRQSYSASSGY) shows a compositional bias: polar residues. A coiled-coil region spans residues 990 to 1027 (LVRQADEIRHRQWQLKKELEEAKRAIGQEEDAKMIANS).

This sequence belongs to the TRAFAC class myosin-kinesin ATPase superfamily. Kinesin family. KIF26 subfamily. As to quaternary structure, interacts with unc-51 and unc-73. Post-translationally, phosphorylated by unc-51.

The protein localises to the cytoplasm. It localises to the cytoskeleton. Its function is as follows. Required for posterior migration of cells and axon growth cones during nervous system assembly. In PLM neuron, regulates innexin unc-9 gap junction turnover by suppressing unc-9 transport out of the gap junctions. This chain is Kinesin-like protein vab-8 (vab-8), found in Caenorhabditis briggsae.